Reading from the N-terminus, the 520-residue chain is Probable methylmalonate-semialdehyde/malonate-semialdehyde dehydrogenase [acylating], mitochondrial (520 aa).

Residues A169, F171, K195, E198, R199, and S248 each contribute to the NAD(+) site. C303 (nucleophile) is an active-site residue. E403 serves as a coordination point for NAD(+).

The protein belongs to the aldehyde dehydrogenase family. Homotetramer.

The protein localises to the mitochondrion. It catalyses the reaction 2-methyl-3-oxopropanoate + NAD(+) + CoA + H2O = propanoyl-CoA + hydrogencarbonate + NADH + H(+). The enzyme catalyses 3-oxopropanoate + NAD(+) + CoA + H2O = hydrogencarbonate + acetyl-CoA + NADH + H(+). Functionally, probable malonate and methylmalonate semialdehyde dehydrogenase involved in the catabolism of valine, thymine, and compounds catabolized by way of beta-alanine, including uracil and cytidine. The chain is Probable methylmalonate-semialdehyde/malonate-semialdehyde dehydrogenase [acylating], mitochondrial from Drosophila pseudoobscura pseudoobscura (Fruit fly).